Here is a 616-residue protein sequence, read N- to C-terminus: Homeodomain-interacting protein kinase 4 (616 aa).

One can recognise a Protein kinase domain in the interval 11–347 (YDIIEVLGKG…PSAALRHPFV (337 aa)). ATP contacts are provided by residues 17-25 (LGKGTFGEV) and Lys40. Residue Asp136 is the Proton acceptor of the active site. The tract at residues 486–616 (HKARKPPAGS…SFLQHVTGHH (131 aa)) is disordered. Over residues 496–511 (KSDSNFSNLIRLSQVS) the composition is skewed to polar residues. A Phosphoserine modification is found at Ser511.

This sequence belongs to the protein kinase superfamily. CMGC Ser/Thr protein kinase family. HIPK subfamily. Post-translationally, autophosphorylated.

The protein localises to the cytoplasm. It catalyses the reaction L-seryl-[protein] + ATP = O-phospho-L-seryl-[protein] + ADP + H(+). The catalysed reaction is L-threonyl-[protein] + ATP = O-phospho-L-threonyl-[protein] + ADP + H(+). Protein kinase that phosphorylates human TP53 at Ser-9, and thus induces TP53 repression of BIRC5 promoter. May act as a corepressor of transcription factors (Potential). This is Homeodomain-interacting protein kinase 4 (HIPK4) from Homo sapiens (Human).